Here is a 296-residue protein sequence, read N- to C-terminus: Non-homologous end joining protein Ku (296 aa).

Positions 11 to 187 (TFGLVNIPVK…ELPEAGEPSS (177 aa)) constitute a Ku domain. The tract at residues 254-296 (AAARRRGDEHEAPARGERRHAAAAAARTTGRPRAARASRKKRG) is disordered. The segment covering 258 to 273 (RRGDEHEAPARGERRH) has biased composition (basic and acidic residues). Over residues 275 to 285 (AAAAARTTGRP) the composition is skewed to low complexity. Positions 286 to 296 (RAARASRKKRG) are enriched in basic residues.

Belongs to the prokaryotic Ku family. Homodimer. Interacts with LigD.

In terms of biological role, with LigD forms a non-homologous end joining (NHEJ) DNA repair enzyme, which repairs dsDNA breaks with reduced fidelity. Binds linear dsDNA with 5'- and 3'- overhangs but not closed circular dsDNA nor ssDNA. Recruits and stimulates the ligase activity of LigD. This Anaeromyxobacter sp. (strain K) protein is Non-homologous end joining protein Ku.